The chain runs to 707 residues: Potassium-transporting ATPase ATP-binding subunit (707 aa).

Basic and acidic residues predominate over residues 1–11; sequence MNTDTQKHEDA. A disordered region spans residues 1–37; the sequence is MNTDTQKHEDAMSTTTPARAPHDDAPSGQQPGQGRVG. 4 helical membrane passes run 61–81, 89–109, 238–258, and 271–291; these read VMAK…TTAF, WFGW…NLAE, IALN…CATL, and MIVL…ALLS. The 4-aspartylphosphate intermediate role is filled by D326. Residues D363, E367, 397–404, and K415 each bind ATP; that span reads FTAQTRMS. The Mg(2+) site is built by D542 and D546. 3 consecutive transmembrane segments (helical) span residues 612-632, 640-660, and 683-703; these read FAII…LNIM, AILS…PLAL, and LGGL…VSLI.

This sequence belongs to the cation transport ATPase (P-type) (TC 3.A.3) family. Type IA subfamily. In terms of assembly, the system is composed of three essential subunits: KdpA, KdpB and KdpC.

The protein localises to the cell membrane. It catalyses the reaction K(+)(out) + ATP + H2O = K(+)(in) + ADP + phosphate + H(+). Its function is as follows. Part of the high-affinity ATP-driven potassium transport (or Kdp) system, which catalyzes the hydrolysis of ATP coupled with the electrogenic transport of potassium into the cytoplasm. This subunit is responsible for energy coupling to the transport system and for the release of the potassium ions to the cytoplasm. This Streptomyces coelicolor (strain ATCC BAA-471 / A3(2) / M145) protein is Potassium-transporting ATPase ATP-binding subunit.